The sequence spans 375 residues: uncharacterized protein (375 aa).

Lys99 participates in a covalent cross-link: Isoglutamyl lysine isopeptide (Lys-Gln) (interchain with Q-Cter in protein Pup).

Belongs to the IMPDH/GMPR family.

This is an uncharacterized protein from Mycolicibacterium smegmatis (strain ATCC 700084 / mc(2)155) (Mycobacterium smegmatis).